We begin with the raw amino-acid sequence, 268 residues long: uncharacterized protein (268 aa).

An RING-type; degenerate zinc finger spans residues 21–61; sequence CVICLQKDGLRAQLSPCGHDQFDYSCICRWMDQSLTCPICK.

It is found in the mitochondrion. Its subcellular location is the nucleus. This is an uncharacterized protein from Schizosaccharomyces pombe (strain 972 / ATCC 24843) (Fission yeast).